Reading from the N-terminus, the 331-residue chain is Ubiquinone biosynthesis protein UbiU (331 aa).

Residues Cys169, Cys176, Cys193, and Cys232 each coordinate [4Fe-4S] cluster.

The protein belongs to the peptidase U32 family. UbiU subfamily. In terms of assembly, forms a heterodimer with UbiV. Requires [4Fe-4S] cluster as cofactor.

It functions in the pathway cofactor biosynthesis; ubiquinone biosynthesis. Functionally, required for O(2)-independent ubiquinone (coenzyme Q) biosynthesis. Together with UbiV, is essential for the C6-hydroxylation reaction in the oxygen-independent ubiquinone biosynthesis pathway. The sequence is that of Ubiquinone biosynthesis protein UbiU from Escherichia coli (strain K12).